Consider the following 37-residue polypeptide: Potassium channel toxin alpha-KTx 15.1 (37 aa).

The residue at position 1 (glutamine 1) is a Pyrrolidone carboxylic acid. 3 disulfides stabilise this stretch: cysteine 8-cysteine 28, cysteine 13-cysteine 33, and cysteine 17-cysteine 35.

It belongs to the short scorpion toxin superfamily. Potassium channel inhibitor family. Alpha-KTx 15 subfamily. As to expression, expressed by the venom gland.

It is found in the secreted. Its function is as follows. Blocker of voltage-gated potassium channels (600 nM of the toxin induces a block of 25% of hERG currents). May also inhibit Kv4/KCND when coexpressed with DPP6 or DPP10. In adult rat brain, it blocks the transient potassium channels in cerebellum granular cells. Blocks potassium channels by a simple 'plugging mechanism', in which a single toxin molecule finds a specific receptor site in the external vestibule of the potassium channel and thereby occludes the outer entry to the potassium conducting pore. The chain is Potassium channel toxin alpha-KTx 15.1 from Androctonus australis (Sahara scorpion).